The following is a 292-amino-acid chain: Siderophore triacetylfusarinine C esterase (292 aa).

6 residues coordinate triacetylfusarinine C: Arg-97, Ser-148, Tyr-149, Ser-174, Trp-176, and His-267.

This sequence belongs to the esterase D family.

The protein localises to the cytoplasm. It catalyses the reaction triacetylfusarinine C + 3 H2O = 3 N-acetylfusarinine + Fe(3+). Its function is as follows. Displays specific triacetylfusarinine C (TAFC) esterase activity but does not hydrolyze fusarinine C, which has the same core structure as TAFC. Hydrolysis optimizes but is not essential for TAFC-mediated iron uptake. Both extra- and intracellular siderophores have been shown to be crucial for the virulence. Subsequent to chelation of iron and uptake, FsC and TAFC are hydrolyzed and the iron is transferred to the metabolism or to the intracellular siderophore ferricrocin (FC) for transport and storage of iron. Hydrolyzes both TAFC and DF-TAFC with equal efficiencies, suggesting that its function might not be restricted to the release of iron from the siderophore but might also include the degradation of the iron-free chelator to protect cells. The chain is Siderophore triacetylfusarinine C esterase from Aspergillus fumigatus (strain ATCC MYA-4609 / CBS 101355 / FGSC A1100 / Af293) (Neosartorya fumigata).